The primary structure comprises 284 residues: Tegument protein VP22 (284 aa).

2 disordered regions span residues 1 to 126 (MSYY…WSID) and 239 to 284 (LYAS…SRRR). A compositionally biased stretch (basic and acidic residues) spans 74 to 83 (SRDDDDRRQP). Basic residues predominate over residues 94-108 (ERRKSQTTVTTRRKT). Positions 115–126 (KSSNSNGPWSID) are enriched in polar residues.

This sequence belongs to the alphaherpesvirinae VP22 tegument protein family. Interacts with gE (via C-terminus); this interaction is necessary for the recruitment of VP22 to the Golgi and its packaging into virions. Interacts with gM (via C-terminus). Interacts with VP16; this interaction allows the formation of a tripartite complex composed of VP16, VP22 and UL41/VHS. Interacts with the capsid-binding protein UL16. Interacts with host CGAS. In terms of processing, highly phosphorylated in the host cell. Packaging is selective for underphosphorylated forms.

The protein resides in the virion tegument. Its subcellular location is the host cytoplasm. It is found in the host nucleus. It localises to the host Golgi apparatus. Functionally, tegument protein that plays different roles during the time course of infection. Participates in both the accumulation of viral mRNAs and viral protein translation at late time of infection. Modulates the RNase activity of the virion host shutoff protein UL41 probably to ensure necessary levels of key cellular mRNAs and proteins. Plays a role in microtubule reorganization that occurs after viral infection by stabilizing microtubule network. Plays a role in the inhibition of host innate immune system by targeting the CGAS enzymatic activity which is the principal cytosolic DNA sensor that detects invading viral DNA. Acts by mediating disruption of liquid-like droplets in which CGAS is activated, thereby preventing CGAS activity. In Amazona oratrix (yellow-headed parrot), this protein is Tegument protein VP22 (UL49).